We begin with the raw amino-acid sequence, 345 residues long: Solute carrier family 25 member 43 (345 aa).

Solcar repeat units follow at residues 11 to 100 (TSSQ…IDEL), 104 to 195 (SQWR…QERH), and 199 to 297 (TSLQ…LYRN). Transmembrane regions (helical) follow at residues 16–36 (LMCV…LEVV), 67–87 (FWKG…IHLA), 109–129 (IVAG…LEVV), 165–185 (GFSL…AVYI), 204–224 (FING…FETV), and 261–281 (VMAL…YFGL).

Belongs to the mitochondrial carrier (TC 2.A.29) family.

Its subcellular location is the mitochondrion inner membrane. In Danio rerio (Zebrafish), this protein is Solute carrier family 25 member 43 (slc25a43).